Here is a 350-residue protein sequence, read N- to C-terminus: MTAPSASRLSLGIVALGAYTPERIVRNEDFEARMDTNAAWIESRTGIRERRFAAEHEYTSDMGVRAVQDMLRRDPQALTDVDAIICATVSPDALMPSTAALIGMQVGLVGAAAFDLSTACSGFVYGLSVASGLIHAGTARRVLVVGAEVLSKIVDQDDRGTAILFGDGAGAAVVGPVPEGYGFQDFVLGADGNGGSSLYMRSVAKQLPGGFAMGDFTGMNGREVFKFAVRVLGDSGTQALEKSGLTTADVDWVIPHQANVRIIEAAMERFGLPMSKTIINLDRYGNTSSATVPLVLREGLDDGRIRDGQQLLLIAFGGGLSWVAGTMKWWGGAPSLQPDRAAEHSAGVQG.

Catalysis depends on residues C120 and H256. Residues 257 to 261 (QANVR) form an ACP-binding region. The active site involves N286.

It belongs to the thiolase-like superfamily. FabH family. Homodimer.

The protein resides in the cytoplasm. It carries out the reaction malonyl-[ACP] + acetyl-CoA + H(+) = 3-oxobutanoyl-[ACP] + CO2 + CoA. It participates in lipid metabolism; fatty acid biosynthesis. Its function is as follows. Catalyzes the condensation reaction of fatty acid synthesis by the addition to an acyl acceptor of two carbons from malonyl-ACP. Catalyzes the first condensation reaction which initiates fatty acid synthesis and may therefore play a role in governing the total rate of fatty acid production. Possesses both acetoacetyl-ACP synthase and acetyl transacylase activities. Its substrate specificity determines the biosynthesis of branched-chain and/or straight-chain of fatty acids. In Deinococcus deserti (strain DSM 17065 / CIP 109153 / LMG 22923 / VCD115), this protein is Beta-ketoacyl-[acyl-carrier-protein] synthase III.